Reading from the N-terminus, the 238-residue chain is Ribonuclease PH (238 aa).

Phosphate-binding positions include Arg-86 and 124 to 126 (GTR).

Belongs to the RNase PH family. As to quaternary structure, homohexameric ring arranged as a trimer of dimers.

It catalyses the reaction tRNA(n+1) + phosphate = tRNA(n) + a ribonucleoside 5'-diphosphate. In terms of biological role, phosphorolytic 3'-5' exoribonuclease that plays an important role in tRNA 3'-end maturation. Removes nucleotide residues following the 3'-CCA terminus of tRNAs; can also add nucleotides to the ends of RNA molecules by using nucleoside diphosphates as substrates, but this may not be physiologically important. Probably plays a role in initiation of 16S rRNA degradation (leading to ribosome degradation) during starvation. This chain is Ribonuclease PH, found in Vibrio cholerae serotype O1 (strain ATCC 39315 / El Tor Inaba N16961).